We begin with the raw amino-acid sequence, 415 residues long: Gamma-glutamyl phosphate reductase (415 aa).

It belongs to the gamma-glutamyl phosphate reductase family.

It localises to the cytoplasm. It carries out the reaction L-glutamate 5-semialdehyde + phosphate + NADP(+) = L-glutamyl 5-phosphate + NADPH + H(+). It functions in the pathway amino-acid biosynthesis; L-proline biosynthesis; L-glutamate 5-semialdehyde from L-glutamate: step 2/2. Functionally, catalyzes the NADPH-dependent reduction of L-glutamate 5-phosphate into L-glutamate 5-semialdehyde and phosphate. The product spontaneously undergoes cyclization to form 1-pyrroline-5-carboxylate. The polypeptide is Gamma-glutamyl phosphate reductase (Salmonella dublin (strain CT_02021853)).